Here is a 96-residue protein sequence, read N- to C-terminus: Large ribosomal subunit protein uL23 (96 aa).

It belongs to the universal ribosomal protein uL23 family. As to quaternary structure, part of the 50S ribosomal subunit. Contacts protein L29, and trigger factor when it is bound to the ribosome.

In terms of biological role, one of the early assembly proteins it binds 23S rRNA. One of the proteins that surrounds the polypeptide exit tunnel on the outside of the ribosome. Forms the main docking site for trigger factor binding to the ribosome. The chain is Large ribosomal subunit protein uL23 from Endomicrobium trichonymphae.